A 293-amino-acid polypeptide reads, in one-letter code: Iron-sulfur cluster transfer protein Nubpl (293 aa).

A CXXC motif probably involved in coordinating iron-sulfur cluster binding region spans residues 214-217 (CQNC).

This sequence belongs to the Mrp/NBP35 ATP-binding proteins family. Homodimer; dimerization is not reliant on iron-sulfur cluster binding. It depends on [4Fe-4S] cluster as a cofactor.

Its subcellular location is the mitochondrion membrane. Functionally, iron-sulfur cluster transfer protein involved in the assembly of the mitochondrial membrane respiratory chain NADH dehydrogenase (Complex I). May deliver one or more Fe-S clusters to complex I subunits. Alleviates pausing in mitochondrial DNA (mtDNA) replication at slow zone 2. May be involved in mtDNA-helicase-mediated mtDNA unwinding and replication by transferring iron-sulfur clusters. The protein is Iron-sulfur cluster transfer protein Nubpl of Drosophila melanogaster (Fruit fly).